The sequence spans 244 residues: B3 domain-containing protein At2g36080 (244 aa).

The TF-B3 DNA-binding region spans 38–144; sequence FEKPLTPSDV…RFFIGWRRRG (107 aa).

Its subcellular location is the nucleus. The protein is B3 domain-containing protein At2g36080 (ARF31) of Arabidopsis thaliana (Mouse-ear cress).